A 340-amino-acid polypeptide reads, in one-letter code: UDP-3-O-acylglucosamine N-acyltransferase (340 aa).

The Proton acceptor role is filled by H237.

Belongs to the transferase hexapeptide repeat family. LpxD subfamily. As to quaternary structure, homotrimer.

The catalysed reaction is a UDP-3-O-[(3R)-3-hydroxyacyl]-alpha-D-glucosamine + a (3R)-hydroxyacyl-[ACP] = a UDP-2-N,3-O-bis[(3R)-3-hydroxyacyl]-alpha-D-glucosamine + holo-[ACP] + H(+). It functions in the pathway bacterial outer membrane biogenesis; LPS lipid A biosynthesis. Catalyzes the N-acylation of UDP-3-O-acylglucosamine using 3-hydroxyacyl-ACP as the acyl donor. Is involved in the biosynthesis of lipid A, a phosphorylated glycolipid that anchors the lipopolysaccharide to the outer membrane of the cell. This Desulfosudis oleivorans (strain DSM 6200 / JCM 39069 / Hxd3) (Desulfococcus oleovorans) protein is UDP-3-O-acylglucosamine N-acyltransferase.